Reading from the N-terminus, the 237-residue chain is Terpene cyclase spyD (237 aa).

The next 7 membrane-spanning stretches (helical) occupy residues 17–37, 47–67, 71–91, 109–129, 138–158, 167–187, and 206–226; these read IYNVLVATAGMMWLINYIVTV, AIPLVSLCCNIAWEFTVVLVY, YLLFEIFCAMWLLVNMVIVYG, HLPLIVPLAILGCISGYYALA, IHGGGTFASFVMTVDCLCQLL, SWTMWLTRVLGSYAAIVGEFL, and WCTGMAVTMDILYACIFWYMG.

It belongs to the paxB family.

The protein localises to the membrane. It carries out the reaction (S)-(2E,6E,10E)-epoxygeranylgeranyl-triacetate lactone = sartorypyrone F. The catalysed reaction is (S)-(2E,6E,10E)-epoxygeranylgeranyl-triacetate lactone = sartorypyrone D. It functions in the pathway secondary metabolite biosynthesis; terpenoid biosynthesis. Functionally, terpene cyclase; part of the gene cluster that mediates the biosynthesis of meroterpenoids called sartorypyrones. Within the pathway, spyD catalyzes the cyclization of epoxygeranylgeranyl-triacetate lactone. SpyD exhibits promiscuous activity, resulting in the formation of bicyclic sartorypyrone F and monocyclic sartorypyrone D. The biosynthesis of sartorypyrones begins with the production of triacetic acid lactone (TAL) by the NR-PKS spyA using one molecule of acetyl-CoA and two molecules of malonyl-CoA. The prenyltransferase spyF then conjugates geranylgeranyl pyrophosphate (GGPP) to TAL to form geranylgeranyl-triacetate lactone, for which the pathway-specific geranylgeranyl pyrophosphate synthase (GGPS) spyE is required to provide GGPP. Subsequently, geranylgeranyl-triacetate lactone is epoxidized at the terminal olein by the FAD-dependent monooxygenase spyC, followed by cyclization of the terpenoid component catalyzed by the terpene cyclase spyD to produce both the bicyclic sartorypyrone F and the monocyclic sartorypyrone D. Finally, the last step of the biosynthesis involves the acetylation of the meroterpenoids sartorypyrones D and F by the acetyltransferase SpyB to produce sartorypyrones A and G, respectively. This is Terpene cyclase spyD from Aspergillus fumigatus (strain ATCC MYA-4609 / CBS 101355 / FGSC A1100 / Af293) (Neosartorya fumigata).